The chain runs to 540 residues: 2,3-bisphosphoglycerate-independent phosphoglycerate mutase (540 aa).

2 residues coordinate Mn(2+): Asp24 and Ser74. Ser74 functions as the Phosphoserine intermediate in the catalytic mechanism. Substrate contacts are provided by residues His135, 165–166 (RD), Arg197, Arg203, 268–271 (RPDR), and Lys341. Mn(2+) contacts are provided by Asp408, His412, Asp449, His450, and His467.

It belongs to the BPG-independent phosphoglycerate mutase family. As to quaternary structure, monomer. The cofactor is Mn(2+).

It carries out the reaction (2R)-2-phosphoglycerate = (2R)-3-phosphoglycerate. The protein operates within carbohydrate degradation; glycolysis; pyruvate from D-glyceraldehyde 3-phosphate: step 3/5. Its function is as follows. Catalyzes the interconversion of 2-phosphoglycerate and 3-phosphoglycerate. In Prochlorococcus marinus (strain SARG / CCMP1375 / SS120), this protein is 2,3-bisphosphoglycerate-independent phosphoglycerate mutase.